Here is a 304-residue protein sequence, read N- to C-terminus: uncharacterized protein (304 aa).

The N-terminal stretch at Met1 to Ala25 is a signal peptide. The GP-PDE domain maps to Pro34 to Arg303.

This is an uncharacterized protein from Mycobacterium tuberculosis (strain CDC 1551 / Oshkosh).